The sequence spans 61 residues: Small ribosomal subunit protein uS14 (61 aa).

Residues C24, C27, C40, and C43 each contribute to the Zn(2+) site.

This sequence belongs to the universal ribosomal protein uS14 family. Zinc-binding uS14 subfamily. In terms of assembly, part of the 30S ribosomal subunit. Contacts proteins S3 and S10. It depends on Zn(2+) as a cofactor.

Its function is as follows. Binds 16S rRNA, required for the assembly of 30S particles and may also be responsible for determining the conformation of the 16S rRNA at the A site. The polypeptide is Small ribosomal subunit protein uS14 (Streptococcus mutans serotype c (strain ATCC 700610 / UA159)).